The sequence spans 84 residues: Exodeoxyribonuclease 7 small subunit (84 aa).

The protein belongs to the XseB family. As to quaternary structure, heterooligomer composed of large and small subunits.

It localises to the cytoplasm. The enzyme catalyses Exonucleolytic cleavage in either 5'- to 3'- or 3'- to 5'-direction to yield nucleoside 5'-phosphates.. In terms of biological role, bidirectionally degrades single-stranded DNA into large acid-insoluble oligonucleotides, which are then degraded further into small acid-soluble oligonucleotides. The sequence is that of Exodeoxyribonuclease 7 small subunit from Bartonella quintana (strain Toulouse) (Rochalimaea quintana).